Reading from the N-terminus, the 154-residue chain is Leghemoglobin-2 (154 aa).

The 149-residue stretch at 3–151 (ALTESQAALV…LAIVIKKEMN (149 aa)) folds into the Globin domain. Ser46 is a binding site for heme b. Ser46 carries the phosphoserine modification. Residue His64 coordinates O2. Positions 67, 98, and 101 each coordinate heme b. Tyr139 bears the Nitrated tyrosine mark.

This sequence belongs to the plant globin family. Monomer. Nitrated in effective nodules and particularly in hypoxic conditions; this mechanism may play a protective role in the symbiosis by buffering toxic peroxynitrite NO(2)(-). Nitration level decrease during nodule senescence. In terms of processing, phosphorylation at Ser-46 disrupts the molecular environment of its porphyrin ring oxygen binding pocket, thus leading to a reduced oxygen consumption and to the delivery of oxygen O(2) to symbiosomes. As to expression, root nodules.

It is found in the cytoplasm. It localises to the cytosol. The protein localises to the nucleus. In terms of biological role, leghemoglobin that reversibly binds oxygen O(2) through a pentacoordinated heme iron. In root nodules, facilitates the diffusion of oxygen to the bacteroids while preventing the bacterial nitrogenase from being inactivated by buffering dioxygen, nitric oxide and carbon monoxide, and promoting the formation of reactive oxygen species (ROS, e.g. H(2)O(2)). This role is essential for symbiotic nitrogen fixation (SNF). The polypeptide is Leghemoglobin-2 (Lupinus luteus (European yellow lupine)).